The sequence spans 277 residues: Sulfur carrier protein FdhD (277 aa).

Cys123 functions as the Cysteine persulfide intermediate in the catalytic mechanism. Position 263–268 (263–268 (FVRGNK)) interacts with Mo-bis(molybdopterin guanine dinucleotide).

It belongs to the FdhD family.

The protein resides in the cytoplasm. In terms of biological role, required for formate dehydrogenase (FDH) activity. Acts as a sulfur carrier protein that transfers sulfur from IscS to the molybdenum cofactor prior to its insertion into FDH. The sequence is that of Sulfur carrier protein FdhD from Corynebacterium efficiens (strain DSM 44549 / YS-314 / AJ 12310 / JCM 11189 / NBRC 100395).